Here is a 357-residue protein sequence, read N- to C-terminus: N-methyltransferase dtpB (357 aa).

The protein belongs to the methyltransferase superfamily.

Its pathway is alkaloid biosynthesis. N-methyltransferase; part of the gene cluster that mediates the biosynthesis of the dimeric diketopiperazine alkaloid ditryptophenaline. The nonribosomal peptide synthase dtpA accepts L-tryptophan and L-phenylalanine as its substrates and forms the phenylalanyl-tryptophanyl cyclic dipeptide product cyclophenylalanyltryptophenyl. The N-methyltransferase dtpB is responsible for the N-methylation of cyclophenylalanyltryptophenyl to yield cyclo-N-methylphenylalanyltryptophenyl. The cytochrome P450 monooxygenase is responsible not only for pyrroloindole ring formation but also for concurrent dimerization of N-methylphenylalanyltryptophanyl diketopiperazine monomers into a homodimeric product. The chain is N-methyltransferase dtpB from Aspergillus flavus (strain ATCC 200026 / FGSC A1120 / IAM 13836 / NRRL 3357 / JCM 12722 / SRRC 167).